Consider the following 148-residue polypeptide: Large ribosomal subunit protein bL9 (148 aa).

Belongs to the bacterial ribosomal protein bL9 family.

Binds to the 23S rRNA. This chain is Large ribosomal subunit protein bL9, found in Frankia casuarinae (strain DSM 45818 / CECT 9043 / HFP020203 / CcI3).